A 573-amino-acid chain; its full sequence is Threonine--tRNA ligase (573 aa).

A catalytic region spans residues 174 to 474 (DHRRINKILE…LLEQTKGALD (301 aa)). Zn(2+)-binding residues include cysteine 268, histidine 319, and histidine 451.

The protein belongs to the class-II aminoacyl-tRNA synthetase family. Homodimer. It depends on Zn(2+) as a cofactor.

It localises to the cytoplasm. It carries out the reaction tRNA(Thr) + L-threonine + ATP = L-threonyl-tRNA(Thr) + AMP + diphosphate + H(+). Functionally, catalyzes the attachment of threonine to tRNA(Thr) in a two-step reaction: L-threonine is first activated by ATP to form Thr-AMP and then transferred to the acceptor end of tRNA(Thr). Also edits incorrectly charged L-seryl-tRNA(Thr). The sequence is that of Threonine--tRNA ligase from Mycoplasmoides gallisepticum (strain R(low / passage 15 / clone 2)) (Mycoplasma gallisepticum).